The chain runs to 211 residues: Large ribosomal subunit protein uL3 (211 aa).

The protein belongs to the universal ribosomal protein uL3 family. Part of the 50S ribosomal subunit. Forms a cluster with proteins L14 and L19.

In terms of biological role, one of the primary rRNA binding proteins, it binds directly near the 3'-end of the 23S rRNA, where it nucleates assembly of the 50S subunit. This is Large ribosomal subunit protein uL3 from Citrifermentans bemidjiense (strain ATCC BAA-1014 / DSM 16622 / JCM 12645 / Bem) (Geobacter bemidjiensis).